Reading from the N-terminus, the 384-residue chain is Alanine racemase (384 aa).

The Proton acceptor; specific for D-alanine role is filled by Lys39. The residue at position 39 (Lys39) is an N6-(pyridoxal phosphate)lysine. Arg138 contributes to the substrate binding site. Tyr265 functions as the Proton acceptor; specific for L-alanine in the catalytic mechanism. Residue Met312 coordinates substrate.

It belongs to the alanine racemase family. It depends on pyridoxal 5'-phosphate as a cofactor.

The enzyme catalyses L-alanine = D-alanine. It participates in amino-acid biosynthesis; D-alanine biosynthesis; D-alanine from L-alanine: step 1/1. Functionally, catalyzes the interconversion of L-alanine and D-alanine. May also act on other amino acids. The sequence is that of Alanine racemase (alr) from Staphylococcus carnosus (strain TM300).